The following is a 450-amino-acid chain: UDP-N-acetylmuramoylalanine--D-glutamate ligase (450 aa).

ATP is bound at residue 115-121 (GTNGKTT).

This sequence belongs to the MurCDEF family.

The protein localises to the cytoplasm. The enzyme catalyses UDP-N-acetyl-alpha-D-muramoyl-L-alanine + D-glutamate + ATP = UDP-N-acetyl-alpha-D-muramoyl-L-alanyl-D-glutamate + ADP + phosphate + H(+). It functions in the pathway cell wall biogenesis; peptidoglycan biosynthesis. Cell wall formation. Catalyzes the addition of glutamate to the nucleotide precursor UDP-N-acetylmuramoyl-L-alanine (UMA). The polypeptide is UDP-N-acetylmuramoylalanine--D-glutamate ligase (Caldanaerobacter subterraneus subsp. tengcongensis (strain DSM 15242 / JCM 11007 / NBRC 100824 / MB4) (Thermoanaerobacter tengcongensis)).